Reading from the N-terminus, the 298-residue chain is Aspartate carbamoyltransferase catalytic subunit (298 aa).

2 residues coordinate carbamoyl phosphate: Arg-53 and Thr-54. Residue Lys-81 participates in L-aspartate binding. Carbamoyl phosphate is bound by residues Arg-103, His-132, and Gln-135. Residues Arg-166 and Arg-218 each contribute to the L-aspartate site. 2 residues coordinate carbamoyl phosphate: Gly-259 and Pro-260.

Belongs to the aspartate/ornithine carbamoyltransferase superfamily. ATCase family. In terms of assembly, heterododecamer (2C3:3R2) of six catalytic PyrB chains organized as two trimers (C3), and six regulatory PyrI chains organized as three dimers (R2).

It carries out the reaction carbamoyl phosphate + L-aspartate = N-carbamoyl-L-aspartate + phosphate + H(+). It participates in pyrimidine metabolism; UMP biosynthesis via de novo pathway; (S)-dihydroorotate from bicarbonate: step 2/3. In terms of biological role, catalyzes the condensation of carbamoyl phosphate and aspartate to form carbamoyl aspartate and inorganic phosphate, the committed step in the de novo pyrimidine nucleotide biosynthesis pathway. This chain is Aspartate carbamoyltransferase catalytic subunit, found in Anaplasma marginale (strain St. Maries).